The following is a 227-amino-acid chain: Cytidylate kinase (227 aa).

12-20 lines the ATP pocket; sequence GPSGAGKGT.

The protein belongs to the cytidylate kinase family. Type 1 subfamily.

The protein resides in the cytoplasm. It carries out the reaction CMP + ATP = CDP + ADP. The enzyme catalyses dCMP + ATP = dCDP + ADP. This Shigella flexneri protein is Cytidylate kinase.